We begin with the raw amino-acid sequence, 277 residues long: (-)-trans-carveol dehydrogenase (277 aa).

Residue Leu10–Asp32 participates in NAD(+) binding. Ser156 is a substrate binding site. Tyr169 (proton acceptor) is an active-site residue.

The protein belongs to the short-chain dehydrogenases/reductases (SDR) family. As to quaternary structure, homotetramer.

The catalysed reaction is (1S,5R)-carveol + NAD(+) = (R)-carvone + NADH + H(+). It catalyses the reaction (1S,5S)-carveol + NAD(+) = (S)-carvone + NADH + H(+). It participates in terpene metabolism; limonene degradation. Competitively inhibited by the product (S)- or (R)-carvone. Catalyzes the oxidation of carveol to carvone, with a strong stereoselectivity since it efficiently converts only the (6S)-stereoisomers, of which (-)-(4R,6S)-trans-carveol is the better substrate. Displays a broad substrate specificity with a preference for substituted cyclohexanols, and does not catalyze the oxidation of primary or short chain aliphatic secondary alcohols. Is also able, albeit more slowly, to oxidize limonene-1,2-diol into 1-hydroxy-2-oxolimonene. The sequence is that of (-)-trans-carveol dehydrogenase (limC) from Rhodococcus erythropolis (Arthrobacter picolinophilus).